Consider the following 636-residue polypeptide: Leucine-rich repeat and fibronectin type-III domain-containing protein 4 (636 aa).

The N-terminal stretch at 1-16 (MAPPLLLLLLASGAAA) is a signal peptide. One can recognise an LRRNT domain in the interval 17-48 (CPLPCVCQNLSESLSTLCAHRGLLFVPPNVDR). At 17-518 (CPLPCVCQNL…LQAHVLGGTL (502 aa)) the chain is on the extracellular side. Asn25 carries an N-linked (GlcNAc...) asparagine glycan. LRR repeat units follow at residues 49–70 (RTVE…DFRN), 73–94 (GLVD…SFGD), 97–118 (SLRS…SLRG), 121–142 (NLQH…AFDD), 146–169 (SLED…GSMP), 170–191 (ALHT…VFAQ), and 194–215 (QLSR…PLFS). Positions 234–280 (NPLHCNCELLWLRRLARPDDLETCASPPTLAGRYFWAVPEGEFSCEP) constitute an LRRCT domain. One can recognise an Ig-like domain in the interval 281–367 (PLIARHTQRL…GEATARVELR (87 aa)). Residues Cys302 and Cys351 are joined by a disulfide bond. Asn333 carries an N-linked (GlcNAc...) asparagine glycan. One can recognise a Fibronectin type-III domain in the interval 405 to 502 (SEPAVQVTEV…GCAHFSTLPA (98 aa)). A helical membrane pass occupies residues 519 to 539 (TVAVGGVLVAALLVFTVALLV). Residues 540 to 636 (RGRGAGNGRL…SAERLEESVV (97 aa)) are Cytoplasmic-facing. The tract at residues 556-585 (VQSQTNGGTSPMPKSHPPRSPPPRPQRSCS) is disordered. Residues 569 to 580 (KSHPPRSPPPRP) show a composition bias toward pro residues. Phosphoserine is present on residues Ser585 and Ser627. The short motif at 633-636 (ESVV) is the PDZ-binding element.

This sequence belongs to the LRFN family. As to quaternary structure, forms heteromeric complexes with LRFN1 and LRFN2. Can form heteromeric complexes with LRFN3 and LRFN5. Unable to form homophilic interactions across cell junctions. Interacts with DLG1, DLG2, DLG3 and DLG4. Glycosylated.

The protein localises to the membrane. Its function is as follows. Promotes neurite outgrowth in hippocampal neurons. May play a role in redistributing DLG4 to the cell periphery. In Rattus norvegicus (Rat), this protein is Leucine-rich repeat and fibronectin type-III domain-containing protein 4 (Lrfn4).